Here is a 26-residue protein sequence, read N- to C-terminus: Photosystem II stability/assembly factor HCF136, chloroplastic (26 aa).

Belongs to the Ycf48 family.

Its subcellular location is the plastid. It is found in the chloroplast thylakoid lumen. Its function is as follows. Essential for photosystem II (PSII) biogenesis; required for assembly of an early intermediate in PSII assembly that includes D2 (psbD) and cytochrome b559. The polypeptide is Photosystem II stability/assembly factor HCF136, chloroplastic (Populus euphratica (Euphrates poplar)).